The sequence spans 423 residues: Phosphoribosylamine--glycine ligase (423 aa).

Residues 107 to 312 (KDLCARYDIP…LLPILYATAT (206 aa)) enclose the ATP-grasp domain. 133–193 (VRAQGAPIVI…EAFLDGEEAS (61 aa)) contributes to the ATP binding site. The Mg(2+) site is built by glutamate 282 and asparagine 284.

Belongs to the GARS family. Requires Mg(2+) as cofactor. The cofactor is Mn(2+).

The enzyme catalyses 5-phospho-beta-D-ribosylamine + glycine + ATP = N(1)-(5-phospho-beta-D-ribosyl)glycinamide + ADP + phosphate + H(+). The protein operates within purine metabolism; IMP biosynthesis via de novo pathway; N(1)-(5-phospho-D-ribosyl)glycinamide from 5-phospho-alpha-D-ribose 1-diphosphate: step 2/2. This chain is Phosphoribosylamine--glycine ligase, found in Agrobacterium fabrum (strain C58 / ATCC 33970) (Agrobacterium tumefaciens (strain C58)).